A 326-amino-acid polypeptide reads, in one-letter code: DNA-directed RNA polymerase subunit alpha (326 aa).

The alpha N-terminal domain (alpha-NTD) stretch occupies residues 1 to 232 (MQGSARDFLK…EQLSSFVELE (232 aa)). An alpha C-terminal domain (alpha-CTD) region spans residues 246-326 (FDPQLLAAVD…NWPPVDLMSE (81 aa)).

Belongs to the RNA polymerase alpha chain family. In terms of assembly, homodimer. The RNAP catalytic core consists of 2 alpha, 1 beta, 1 beta' and 1 omega subunit. When a sigma factor is associated with the core the holoenzyme is formed, which can initiate transcription.

It carries out the reaction RNA(n) + a ribonucleoside 5'-triphosphate = RNA(n+1) + diphosphate. In terms of biological role, DNA-dependent RNA polymerase catalyzes the transcription of DNA into RNA using the four ribonucleoside triphosphates as substrates. The chain is DNA-directed RNA polymerase subunit alpha from Vesicomyosocius okutanii subsp. Calyptogena okutanii (strain HA).